The chain runs to 722 residues: Polyribonucleotide nucleotidyltransferase (722 aa).

Residues D495 and D501 each coordinate Mg(2+). The KH domain maps to 562 to 621; sequence PRLLSFRIDPELIGTVIGPGGRTIKGITERTNTKIDIEDGGIVTIASHDGAAAEEAQRII. In terms of domain architecture, S1 motif spans 631–699; sequence GEIFPGSITR…NRGRINLTLR (69 aa). The interval 700–722 is disordered; the sequence is GVSQNGGMSNYPEPTPTPVAPLT. Over residues 712-722 the composition is skewed to pro residues; that stretch reads EPTPTPVAPLT.

The protein belongs to the polyribonucleotide nucleotidyltransferase family. The cofactor is Mg(2+).

The protein localises to the cytoplasm. The enzyme catalyses RNA(n+1) + phosphate = RNA(n) + a ribonucleoside 5'-diphosphate. Involved in mRNA degradation. Catalyzes the phosphorolysis of single-stranded polyribonucleotides processively in the 3'- to 5'-direction. This is Polyribonucleotide nucleotidyltransferase from Prochlorococcus marinus (strain NATL1A).